We begin with the raw amino-acid sequence, 530 residues long: GATA zinc finger domain-containing protein 4 (530 aa).

2 disordered regions span residues 1–27 and 212–386; these read MSIN…FWDN and STVV…INNN. 3 stretches are compositionally biased toward low complexity: residues 7–17, 216–290, and 299–386; these read NNNKNNNNKNN, SNSP…FNNN, and NSNN…INNN. The segment at 494–518 adopts a GATA-type zinc-finger fold; the sequence is CSMCNIKESISWIKTMVNGQLCNAC.

The protein is GATA zinc finger domain-containing protein 4 (gtaD) of Dictyostelium discoideum (Social amoeba).